Here is a 172-residue protein sequence, read N- to C-terminus: Peptide methionine sulfoxide reductase MsrA (172 aa).

The active site involves Cys12.

This sequence belongs to the MsrA Met sulfoxide reductase family.

The enzyme catalyses L-methionyl-[protein] + [thioredoxin]-disulfide + H2O = L-methionyl-(S)-S-oxide-[protein] + [thioredoxin]-dithiol. The catalysed reaction is [thioredoxin]-disulfide + L-methionine + H2O = L-methionine (S)-S-oxide + [thioredoxin]-dithiol. In terms of biological role, has an important function as a repair enzyme for proteins that have been inactivated by oxidation. Catalyzes the reversible oxidation-reduction of methionine sulfoxide in proteins to methionine. The protein is Peptide methionine sulfoxide reductase MsrA of Ligilactobacillus salivarius (strain UCC118) (Lactobacillus salivarius).